The sequence spans 1836 residues: InaD-like protein (1836 aa).

The 65-residue stretch at 1–65 (MPENPAAEKM…SIKQLKGQLS (65 aa)) folds into the L27 domain. PDZ domains follow at residues 134–221 (YIDI…AREV), 248–328 (DVEL…ARDP), and 365–453 (NVEL…VRRK). 3 positions are modified to phosphoserine: S455, S459, and S482. Residues 456–466 (LSASPFEQPSS) are compositionally biased toward polar residues. The segment at 456 to 492 (LSASPFEQPSSREAVAEPPEVPELTGSLKPETNSRME) is disordered. Residues 555–641 (DEELQKYSKL…PFTLVCCRRL (87 aa)) form the PDZ 4 domain. At S647 the chain carries Phosphoserine. PDZ domains lie at 687–773 (TVEL…ICKP) and 1074–1166 (PRIV…VVQS). Over residues 1173 to 1191 (VIPSVNNKGKTPPQNQDQN) the composition is skewed to polar residues. The tract at residues 1173-1232 (VIPSVNNKGKTPPQNQDQNTQEKKAKRHGTAPPPMKLPPPYRAPSADTEESEEDSALTDK) is disordered. Pro residues predominate over residues 1203–1214 (APPPMKLPPPYR). The residue at position 1217 (S1217) is a Phosphoserine. A compositionally biased stretch (acidic residues) spans 1219–1228 (DTEESEEDSA). Positions 1245-1328 (LHIIELEKDK…PTRVKLVFIR (84 aa)) constitute a PDZ 7 domain. The disordered stretch occupies residues 1341-1448 (FPVPSHSPSP…ADVTGSGNFQ (108 aa)). A compositionally biased stretch (basic and acidic residues) spans 1372–1383 (PLPERESSKPED). Polar residues-rich tracts occupy residues 1415–1426 (YSAQVSSSSQEI) and 1434–1448 (CQST…GNFQ). 2 consecutive PDZ domains span residues 1472–1555 (EMII…VIYR) and 1568–1650 (VFLV…EIGR). T1545 carries the phosphothreonine modification. The disordered stretch occupies residues 1657-1678 (ASSRKTSQNSQGDQHSAHSSCR). The PDZ 10 domain maps to 1709 to 1795 (PRTVEIIREL…FGRIILQVVA (87 aa)). The disordered stretch occupies residues 1813 to 1836 (SQLGSPTADRHPQDPEELLQRTAD).

In terms of assembly, forms a ternary complex with PALS1 and CRB1. Component of a complex whose core is composed of ARHGAP17, AMOT, PALS1, INADL/PATJ and PARD3/PAR3. Forms a heterotrimeric complex composed of MMP5, LIN7B and PATJ; the N-terminal L27 domain of PALS1 interacts with the L27 domain of PATJ and the C-terminal L27 domain of PALS1 interacts with the L27 domain of LIN7B. Component of a complex composed of CRB3, PALS1 and PATJ. As part of the Crumbs complex; interacts with WWP1, the interaction is enhanced by AMOTL2 and facilitates WWP1 localization to the plasma membrane. The Crumbs complex promotes monoubiquitination of AMOTL2 by WWP1, which activates the Hippo signaling pathway. Interacts (via N-terminus) with PALS1/PALS (via PDZ domain). Interacts with TJP3/ZO-3 and CLDN1/claudin-1. Interacts with ASIC3, KCNJ10, KCNJ15, GRIN2A, GRIN2B, GRIN2C, GRIN2D, NLGN2, and HTR2A. Interacts with MPP7. Directly interacts with HTR4. Interacts (via PDZ domain 8) with WWC1 (via the ADDV motif). Interacts with SLC6A4. Interacts (via C-terminus) with ARHGEF18. Interacts with NPHP1. Interacts with PARD3/PAR3. Interacts (via PDZ1-6 domains) with TJP1/ZO1; the interaction is required for attachment and extension of TJP1/ZO1 condensates along the apical cell interface. As to expression, abundantly expressed in germ cells, also expressed in testes and seminiferous tubules, with faint expression in Sertoli cells (at protein level).

It localises to the cell junction. The protein resides in the tight junction. Its subcellular location is the apical cell membrane. It is found in the cytoplasm. The protein localises to the perinuclear region. In terms of biological role, scaffolding protein that facilitates the localization of proteins to the cell membrane. Required for the correct formation of tight junctions and epithelial apico-basal polarity. Acts (via its L27 domain) as an apical connector and elongation factor for multistranded TJP1/ZO1 condensates that form a tight junction belt, thereby required for the formation of the tight junction-mediated cell barrier. Positively regulates epithelial cell microtubule elongation and cell migration, possibly via facilitating localization of PRKCI/aPKC and PAR3D/PAR3 at the leading edge of migrating cells. Plays a role in the correct reorientation of the microtubule-organizing center during epithelial migration. May regulate the surface expression and/or function of ASIC3 in sensory neurons. May recruit ARHGEF18 to apical cell-cell boundaries. The sequence is that of InaD-like protein from Rattus norvegicus (Rat).